Reading from the N-terminus, the 616-residue chain is Methionine--tRNA ligase, chloroplastic/mitochondrial (616 aa).

The 'HIGH' region motif lies at 78–88; sequence YYVNAPPHMGS. The 'KMSKS' region motif lies at 366–370; that stretch reads KMGKS. Lys369 contacts ATP. Over residues 582–593 the composition is skewed to basic and acidic residues; the sequence is LNPEKEEDEKKP. The disordered stretch occupies residues 582–602; that stretch reads LNPEKEEDEKKPKVGKKTGKA.

The protein belongs to the class-I aminoacyl-tRNA synthetase family.

The protein resides in the plastid. It is found in the chloroplast. The protein localises to the mitochondrion. The catalysed reaction is tRNA(Met) + L-methionine + ATP = L-methionyl-tRNA(Met) + AMP + diphosphate. The protein is Methionine--tRNA ligase, chloroplastic/mitochondrial of Arabidopsis thaliana (Mouse-ear cress).